Reading from the N-terminus, the 361-residue chain is Chorismate synthase (361 aa).

NADP(+) contacts are provided by arginine 48 and arginine 54. FMN-binding positions include 125 to 127 (RSS), 238 to 239 (NA), glycine 278, 293 to 297 (KPTSS), and arginine 319.

Belongs to the chorismate synthase family. Homotetramer. The cofactor is FMNH2.

It carries out the reaction 5-O-(1-carboxyvinyl)-3-phosphoshikimate = chorismate + phosphate. Its pathway is metabolic intermediate biosynthesis; chorismate biosynthesis; chorismate from D-erythrose 4-phosphate and phosphoenolpyruvate: step 7/7. Functionally, catalyzes the anti-1,4-elimination of the C-3 phosphate and the C-6 proR hydrogen from 5-enolpyruvylshikimate-3-phosphate (EPSP) to yield chorismate, which is the branch point compound that serves as the starting substrate for the three terminal pathways of aromatic amino acid biosynthesis. This reaction introduces a second double bond into the aromatic ring system. The polypeptide is Chorismate synthase (Vibrio vulnificus (strain YJ016)).